Here is a 350-residue protein sequence, read N- to C-terminus: tRNA uridine(34) hydroxylase (350 aa).

Residues 146–240 (DDPDALFIDM…YARKAREQGL (95 aa)) enclose the Rhodanese domain. C200 functions as the Cysteine persulfide intermediate in the catalytic mechanism.

It belongs to the TrhO family.

The enzyme catalyses uridine(34) in tRNA + AH2 + O2 = 5-hydroxyuridine(34) in tRNA + A + H2O. Functionally, catalyzes oxygen-dependent 5-hydroxyuridine (ho5U) modification at position 34 in tRNAs. In Shigella dysenteriae serotype 1 (strain Sd197), this protein is tRNA uridine(34) hydroxylase.